The primary structure comprises 427 residues: Cholecystokinin receptor type A (427 aa).

At 1–41 (MDAVASLLGNASGIPPPCELGLDNETLFCLDQPPPSKEWQP) the chain is on the extracellular side. Asn-10 and Asn-24 each carry an N-linked (GlcNAc...) asparagine glycan. Residues Cys-18 and Cys-29 are joined by a disulfide bond. Residues 42 to 67 (AVQILLYSLIFLLSVLGNTLVITVLI) form a helical membrane-spanning segment. Topologically, residues 68-77 (RNKRMRTVTN) are cytoplasmic. A helical transmembrane segment spans residues 78 to 104 (IFLLSLAISDLMLCLFCMPFNLIPNLL). Topologically, residues 105–115 (KDFIFGSALCK) are extracellular. An intrachain disulfide couples Cys-114 to Cys-196. A helical membrane pass occupies residues 116–137 (TTTYLMGTSVSVSTLNLVAISL). Residues 138 to 157 (ERYGAICKPLQSRVWQTKSH) lie on the Cytoplasmic side of the membrane. The chain crosses the membrane as a helical span at residues 158–178 (ALKVIAATWCLSFAIMTPYPI). The Extracellular portion of the chain corresponds to 179–210 (YSNLVPFTKTNNQTANMCRFLLPSDVMQQAWH). Asn-190 carries an N-linked (GlcNAc...) asparagine glycan. Residues 211-234 (TFLLLILFLIPGIVMMVAYGMISL) form a helical membrane-spanning segment. At 235–312 (ELYQGIKFDA…TLMAKKRVIR (78 aa)) the chain is on the cytoplasmic side. A helical membrane pass occupies residues 313 to 333 (MLMVIVVLFFLCWMPIFSANA). The Extracellular segment spans residues 334–348 (WRAYDTVSAERRLSG). A helical transmembrane segment spans residues 349–372 (TPISFILLLSYTSSCVNPIIYCFM). Topologically, residues 373-427 (NRRFRLGFMATFPCCPNPGPPGPRAEAGEEEEGRTTRASLSRYSYSHMSASAPPS) are cytoplasmic. Cys-386 is lipidated: S-palmitoyl cysteine. The segment at 391–427 (GPPGPRAEAGEEEEGRTTRASLSRYSYSHMSASAPPS) is disordered. Residues 411–421 (SLSRYSYSHMS) show a composition bias toward polar residues.

This sequence belongs to the G-protein coupled receptor 1 family.

It is found in the cell membrane. Its function is as follows. Receptor for cholecystokinin. Mediates pancreatic growth and enzyme secretion, smooth muscle contraction of the gall bladder and stomach. Has a 1000-fold higher affinity for CCK rather than for gastrin. It modulates feeding and dopamine-induced behavior in the central and peripheral nervous system. This receptor mediates its action by association with G proteins that activate a phosphatidylinositol-calcium second messenger system. In Oryctolagus cuniculus (Rabbit), this protein is Cholecystokinin receptor type A (CCKAR).